A 320-amino-acid polypeptide reads, in one-letter code: Tyrosine recombinase Synpcc7942_B2651 (320 aa).

The Core-binding (CB) domain maps to 16-106 (VQDWDVLQML…ALKSLVRFSR (91 aa)). The region spanning 127-313 (RDTTGTTPER…RQDFQGECTE (187 aa)) is the Tyr recombinase domain. Residues R167, K193, H264, R267, and H291 contribute to the active site. Y300 (O-(3'-phospho-DNA)-tyrosine intermediate) is an active-site residue.

Belongs to the 'phage' integrase family.

Its subcellular location is the cytoplasm. Site-specific tyrosine recombinase, which acts by catalyzing the cutting and rejoining of the recombining DNA molecules. This chain is Tyrosine recombinase Synpcc7942_B2651, found in Synechococcus elongatus (strain ATCC 33912 / PCC 7942 / FACHB-805) (Anacystis nidulans R2).